We begin with the raw amino-acid sequence, 435 residues long: Membrane-bound ghrelin O-acyltransferase MBOAT4 (435 aa).

Residues Met1 to Gln5 lie on the Lumenal side of the membrane. The chain crosses the membrane as a helical span at residues Leu6–Phe26. Residues Asn27–Arg40 are Cytoplasmic-facing. Residues Tyr41 to Met56 traverse the membrane as a helical segment. The Lumenal segment spans residues Gly57–Tyr59. A helical membrane pass occupies residues Ser60–Phe76. The Cytoplasmic segment spans residues Leu77–Val82. The chain crosses the membrane as a helical span at residues His83–Leu101. The Lumenal portion of the chain corresponds to His102–Leu120. A helical membrane pass occupies residues Ser121 to Asp136. Topologically, residues Ile137–Thr206 are cytoplasmic. The chain crosses the membrane as a helical span at residues Trp207–Ser227. At Ala228–Cys240 the chain is on the lumenal side. A helical transmembrane segment spans residues Ile241–Leu261. Residues Asp262–Arg324 are Cytoplasmic-facing. Catalysis depends on residues Asn307 and His338. Residues Trp325–His338 form a helical membrane-spanning segment. Residues Gly339–Leu340 lie on the Lumenal side of the membrane. A helical membrane pass occupies residues His341 to Ala357. Residues Asp358–Leu376 are Cytoplasmic-facing. A helical membrane pass occupies residues Leu377–Val397. Topologically, residues Glu398–Gln407 are lumenal. The chain crosses the membrane as a helical span at residues Leu408–Ala428. Over Glu429–Asn435 the chain is Cytoplasmic.

The protein belongs to the membrane-bound acyltransferase family. In terms of assembly, monomer. Not glycosylated. As to expression, highly expressed in stomach and pancreas. Lower expression in small intestine and colon. Very low expression in testis.

Its subcellular location is the endoplasmic reticulum membrane. It catalyses the reaction octanoyl-CoA + L-seryl-[protein] = O-octanoyl-L-seryl-[protein] + CoA. The catalysed reaction is hexanoyl-CoA + L-seryl-[protein] = O-hexanoyl-L-seryl-[protein] + CoA. It carries out the reaction decanoyl-CoA + L-seryl-[protein] = O-decanoyl-L-seryl-[protein] + CoA. The enzyme catalyses L-seryl-[protein] + acetyl-CoA = O-acetyl-L-seryl-[protein] + CoA. It catalyses the reaction L-seryl-[protein] + butanoyl-CoA = O-butanoyl-L-seryl-[protein] + CoA. The catalysed reaction is pentanoyl-CoA + L-seryl-[protein] = O-pentanoyl-L-seryl-[protein] + CoA. It carries out the reaction heptanoyl-CoA + L-seryl-[protein] = O-heptanoyl-L-seryl-[protein] + CoA. The enzyme catalyses nonanoyl-CoA + L-seryl-[protein] = O-nonanoyl-L-seryl-[protein] + CoA. It catalyses the reaction L-seryl-[protein] + dodecanoyl-CoA = O-dodecanoyl-L-seryl-[protein] + CoA. The catalysed reaction is L-seryl-[protein] + tetradecanoyl-CoA = O-tetradecanoyl-L-seryl-[protein] + CoA. It carries out the reaction a fatty acyl-CoA + L-seryl-[protein] = O-fatty acyl-L-seryl-[protein] + CoA. Inhibited by 1-[2-cyano-3,12-dioxooleana-1,9(11)- dien-28-oyl]ethylamide (CDDO-EA) with an IC(50) of 60 uM. Inhibited by Fe3+ and Cu2+ and the O-acyltransferase activity is completely blocked over 5 mM Fe3+ and 0.5 mM Cu2+. Catalyzes ghrelin acylation at 'Ser-3' using preferentially octanoyl-CoA, hexanoyl-CoA and decanoyl-CoA as acyl-CoA donors leading to ghrelin activity. In vitro also uses acyl-CoA donors of different lengths from short-chain (C2) to long-chain fatty acids (C16) knowing that acyl-CoA donors from butanoyl-CoA (C4) to dodecanoyl-CoA (C12) are more efficient compared to longer acyl-CoA donors, such as myristoyl-CoA (C14) and palmitoyl-CoA (C16) that are not efficient. Its function is as follows. Inactive octanoyltransferase activity. The protein is Membrane-bound ghrelin O-acyltransferase MBOAT4 of Mus musculus (Mouse).